The chain runs to 198 residues: Peroxiredoxin-2 (198 aa).

Ala-2 carries the post-translational modification N-acetylalanine. Residues 6–164 (AHIGKPAPDF…ALRLVQAFQY (159 aa)) form the Thioredoxin domain. Cys-51 acts as the Cysteine sulfenic acid (-SOH) intermediate in catalysis. Ser-112 is subject to Phosphoserine. Phosphothreonine is present on Thr-182. N6-acetyllysine is present on Lys-196.

This sequence belongs to the peroxiredoxin family. AhpC/Prx1 subfamily. In terms of assembly, homodimer; disulfide-linked, upon oxidation. 5 homodimers assemble to form a ring-like decamer. Interacts with TIPIN. In terms of processing, the enzyme can be inactivated by further oxidation of the cysteine sulfenic acid (C(P)-SOH) to sulphinic acid (C(P)-SO2H) instead of its condensation to a disulfide bond. It can be reactivated by forming a transient disulfide bond with sulfiredoxin SRXN1, which reduces the cysteine sulfinic acid in an ATP- and Mg-dependent manner. Post-translationally, acetylation increases resistance to transition to high molecular-mass complexes. Deacetylated by HDAC6 which decreases reducing activity.

It is found in the cytoplasm. It carries out the reaction a hydroperoxide + [thioredoxin]-dithiol = an alcohol + [thioredoxin]-disulfide + H2O. Its function is as follows. Thiol-specific peroxidase that catalyzes the reduction of hydrogen peroxide and organic hydroperoxides to water and alcohols, respectively. Plays a role in cell protection against oxidative stress by detoxifying peroxides and as sensor of hydrogen peroxide-mediated signaling events. Might participate in the signaling cascades of growth factors and tumor necrosis factor-alpha by regulating the intracellular concentrations of H(2)O(2). The sequence is that of Peroxiredoxin-2 (Prdx2) from Rattus norvegicus (Rat).